A 28-amino-acid polypeptide reads, in one-letter code: SLQAATEWLKANNQRGFLGEMGAGSNAD.

Catalysis depends on E20, which acts as the Nucleophile.

The protein belongs to the glycosyl hydrolase 5 (cellulase A) family.

Its subcellular location is the cell membrane. It carries out the reaction Endohydrolysis of (1-&gt;4)-beta-D-glucosidic linkages in cellulose, lichenin and cereal beta-D-glucans.. This is Endoglucanase from Schizophyllum commune (Split gill fungus).